Reading from the N-terminus, the 232-residue chain is Ribonuclease P protein component 3 (232 aa).

This sequence belongs to the eukaryotic/archaeal RNase P protein component 3 family. Consists of a catalytic RNA component and at least 5 protein subunits.

Its subcellular location is the cytoplasm. It catalyses the reaction Endonucleolytic cleavage of RNA, removing 5'-extranucleotides from tRNA precursor.. Functionally, part of ribonuclease P, a protein complex that generates mature tRNA molecules by cleaving their 5'-ends. The chain is Ribonuclease P protein component 3 from Methanococcus maripaludis (strain DSM 14266 / JCM 13030 / NBRC 101832 / S2 / LL).